A 261-amino-acid chain; its full sequence is Arcelin-5A (261 aa).

Residues 1 to 21 (MASSKLLSLALFLVLLTHANS) form the signal peptide. Residues Asn-43, Asn-91, and Asn-100 are each glycosylated (N-linked (GlcNAc...) asparagine). Cysteines 167 and 203 form a disulfide. The propeptide occupies 255–261 (ILLNNIL).

It belongs to the leguminous lectin family. In terms of assembly, monomer. Post-translationally, the C-terminal segment appears to be highly susceptible to proteolysis.

Its function is as follows. Seed storage. This carbohydrate-binding lectin has toxic effects on bean bruchid pests. The sequence is that of Arcelin-5A (ARC5A) from Phaseolus vulgaris (Kidney bean).